The sequence spans 551 residues: Probable inorganic carbon transporter subunit DabB2 (551 aa).

The next 14 helical transmembrane spans lie at 6 to 26 (SHTT…AAVI), 42 to 62 (VQWT…SFLF), 65 to 85 (QQNL…LALS), 86 to 106 (IQVN…LSVI), 132 to 152 (GFFL…AIIA), 187 to 207 (LLLA…FSQI), 217 to 237 (LSIA…LKSA), 252 to 272 (PTPV…IIVL), 284 to 304 (ALLL…LVML), 321 to 341 (LGFM…LHLV), 374 to 394 (VVAW…IAAA), 404 to 424 (MLPA…LKAL), 434 to 454 (VAAG…EVFI), and 469 to 489 (PLLD…VAWL).

Belongs to the inorganic carbon transporter (TC 9.A.2) DabB family. In terms of assembly, forms a complex with DabA2, possibly a heterodimer.

The protein resides in the cell inner membrane. Its activity is regulated as follows. Uptake of inorganic carbon by cells in the presence of thiosulphate is fully inhibited by the uncouplers carbonyl cyanide m-chlorophenyl hydrazone (CCCP), carbonyl cyanide p-trifluoromethoxyphenyl hydrazone (FCCP), S13 or SF6847. Not inhibited by the ATPase inhibitor N,N-dicyclohexylcarbodiimide (DCCD). Inorganic carbon uptake is inhibited by the ionophore carbonyl cyanide m-chlorophenyl hydrazone (CCCP), suggesting uptake is coupled to a cation gradient. Functionally, part of an energy-coupled inorganic carbon pump; its substrate may be carbon dioxide. Expression of both dabA2 and dabB2 (DAB2) restores growth in ambient air to E.coli deleted of its carbonic anhydrase genes (called CAfree, deletion of 'can' and 'cynT'); neither dabA2 or dabB2 alone is sufficient. Rescue is pH-independent, suggesting it transports CO(2) and not carbonate ions. Together the genes allow greater than normal uptake of inorganic carbon by E.coli. Uptake of carbon dioxide rather than bicarbonate has been suggested based on kinetic calculations. The chain is Probable inorganic carbon transporter subunit DabB2 from Halothiobacillus neapolitanus (strain ATCC 23641 / c2) (Thiobacillus neapolitanus).